The chain runs to 748 residues: Junctophilin-3 (748 aa).

Residues 1 to 727 are Cytoplasmic-facing; the sequence is MSSGGRFNFD…LKSSTGSAPI (727 aa). MORN repeat units follow at residues 15-37, 39-60, 61-82, 83-105, 107-129, and 130-152; these read YCGGWEDGKAHGHGVCTGPKGQG, YTGSWSHGFEVLGVYTWPSGNT, YQGTWAQGKRHGIGLESKGKWV, YKGEWTHGFKGRYGVRECAGNGA, YEGTWSNGLQDGYGTETYSDGGT, and YQGQWVGGMRQGYGVRQSVPYGM. Residues 230 to 259 form a disordered region; the sequence is SKSSLASQRSKQSSFRSEAGMSTVSSTASD. Over residues 231–244 the composition is skewed to low complexity; it reads KSSLASQRSKQSSF. Polar residues predominate over residues 249 to 259; that stretch reads GMSTVSSTASD. MORN repeat units follow at residues 288–310 and 311–333; these read YVGEWKNDKRSGFGVSQRSDGLK and YEGEWASNRRHGYGCMTFPDGTK. The segment at 416 to 496 is disordered; it reads AKEFSPSFQH…TPPPAPAARN (81 aa). Ser440 carries the post-translational modification Phosphoserine. Positions 448 to 457 are enriched in polar residues; the sequence is STGTPLQQES. Thr451 is subject to Phosphothreonine. Residue Ser457 is modified to Phosphoserine. The residue at position 471 (Thr471) is a Phosphothreonine. Residues Ser475 and Ser506 each carry the phosphoserine modification. Disordered stretches follow at residues 526-597 and 624-649; these read CARS…SPGG and HPQKRRYSKGGACRGLGDDHRPEDRG. A compositionally biased stretch (basic and acidic residues) spans 639–649; the sequence is LGDDHRPEDRG. Residues Ser703 and Ser710 each carry the phosphoserine modification. A helical; Anchor for type IV membrane protein membrane pass occupies residues 728 to 748; that stretch reads LVVMVILLNIGVAILFINFFI.

Belongs to the junctophilin family. In terms of tissue distribution, specifically expressed in brain.

The protein resides in the cell membrane. It is found in the endoplasmic reticulum membrane. Functionally, junctophilins contribute to the formation of junctional membrane complexes (JMCs) which link the plasma membrane with the endoplasmic or sarcoplasmic reticulum in excitable cells. Provides a structural foundation for functional cross-talk between the cell surface and intracellular calcium release channels. JPH3 is brain-specific and appears to have an active role in certain neurons involved in motor coordination and memory. This chain is Junctophilin-3 (JPH3), found in Homo sapiens (Human).